The primary structure comprises 326 residues: Olfactory receptor 11H2 (326 aa).

Topologically, residues 1–44 (MCPLTLHVTGLMNVSEPNSSFAFVNEFILQGFSCEWTIQIFLFS) are extracellular. Asparagine 13 and asparagine 18 each carry an N-linked (GlcNAc...) asparagine glycan. A helical transmembrane segment spans residues 45-65 (LFTTIYALTITGNGAIAFVLW). The Cytoplasmic portion of the chain corresponds to 66 to 72 (CDRRLHT). The chain crosses the membrane as a helical span at residues 73 to 93 (PMYMFLGNFSFLEIWYVSSTV). The Extracellular portion of the chain corresponds to 94-112 (PKMLVNFLSEKKNISFAGC). An N-linked (GlcNAc...) asparagine glycan is attached at asparagine 106. Cysteine 112 and cysteine 194 form a disulfide bridge. Residues 113–133 (FLQFYFFFSLGTSECLLLTVM) form a helical membrane-spanning segment. At 134-158 (AFDQYLAICRPLLYPNIMTGHLYAK) the chain is on the cytoplasmic side. Residues 159–179 (LVILCWVCGFLWFLIPIVLIS) traverse the membrane as a helical segment. The Extracellular segment spans residues 180–216 (QKPFCGPNIIDHVVCDPGPLFALDCVSAPRIQLFCYT). Residues 217 to 237 (LSSLVIFGNFLFIIGSYTLVL) traverse the membrane as a helical segment. Residues 238–259 (KAVLGMPSSTGRHKAFSTCGSH) lie on the Cytoplasmic side of the membrane. The chain crosses the membrane as a helical span at residues 260-280 (LAVVSLCYSPLMVMYVSPGLG). Over 281 to 287 (HSTGMQK) the chain is Extracellular. The chain crosses the membrane as a helical span at residues 288 to 308 (IETLFYAMVTPLFNPLIYSLQ). The Cytoplasmic portion of the chain corresponds to 309–326 (NKEIKAALRKVLGSSNII).

Belongs to the G-protein coupled receptor 1 family.

The protein resides in the cell membrane. Functionally, odorant receptor. This Homo sapiens (Human) protein is Olfactory receptor 11H2 (OR11H2).